Consider the following 688-residue polypeptide: Zinc finger protein 770 (688 aa).

A Glycyl lysine isopeptide (Lys-Gly) (interchain with G-Cter in SUMO2) cross-link involves residue lysine 11. 3 C2H2-type zinc fingers span residues 27–49, 55–77, and 81–103; these read YVCN…YLIH, FECD…QLTH, and FKCS…QQLH. Glycyl lysine isopeptide (Lys-Gly) (interchain with G-Cter in SUMO2) cross-links involve residues lysine 112, lysine 121, and lysine 146. 3 C2H2-type zinc fingers span residues 160–182, 188–210, and 216–238; these read HACT…VLIH, FKCV…QLTH, and FQCC…KQIH. Residue lysine 262 forms a Glycyl lysine isopeptide (Lys-Gly) (interchain with G-Cter in SUMO2) linkage. The C2H2-type 7; degenerate zinc finger occupies 294-318; it reads FQCPKCEKCFESEQILNEHSCFPAR. Glycyl lysine isopeptide (Lys-Gly) (interchain with G-Cter in SUMO2) cross-links involve residues lysine 420 and lysine 437. 4 C2H2-type zinc fingers span residues 475–497, 503–525, 623–645, and 651–673; these read CPCD…YLIH, FGCN…EQTH, YRCS…YLIH, and FECS…QLTH. Lysine 681 participates in a covalent cross-link: Glycyl lysine isopeptide (Lys-Gly) (interchain with G-Cter in SUMO2).

This sequence belongs to the krueppel C2H2-type zinc-finger protein family.

It localises to the nucleus. In terms of biological role, may be involved in transcriptional regulation. This Pongo abelii (Sumatran orangutan) protein is Zinc finger protein 770 (ZNF770).